Consider the following 1181-residue polypeptide: Integrin alpha-7 (1181 aa).

An N-terminal signal peptide occupies residues 1–33 (MAGARSRDPWGASGICYLFGSLLVELLFSRAVA). Residues 34 to 1082 (FNLDVMGALR…MAVVAEGVPW (1049 aa)) are Extracellular-facing. FG-GAP repeat units follow at residues 35-103 (NLDV…ETDC), 110-175 (QGAD…IRDE), 185-238 (EGRP…SADL), 292-349 (DRLP…ASRL), 350-411 (VPEV…HWAG), 412-467 (ISPL…GVVA), and 471-530 (QVLE…IAPR). Asn-86 carries N-linked (GlcNAc...) asparagine glycosylation. Cystine bridges form between Cys-94-Cys-103, Cys-140-Cys-163, and Cys-184-Cys-197. Ca(2+) is bound by residues Asp-372, Asn-374, Asp-376, Asp-380, Asp-434, Asn-436, Asp-438, Asp-442, Asp-492, Asp-494, Asn-496, Tyr-498, and Asp-500. Intrachain disulfides connect Cys-539–Cys-546, Cys-552–Cys-615, Cys-681–Cys-687, Cys-781–Cys-792, Cys-939–Cys-994, and Cys-1001–Cys-1006. Asn-786 carries N-linked (GlcNAc...) asparagine glycosylation. Positions 950-961 (VDSRDRRRRELE) are enriched in basic and acidic residues. The segment at 950–978 (VDSRDRRRRELEPPEQQEPGERQEPSMSW) is disordered. Asn-989 carries N-linked (GlcNAc...) asparagine glycosylation. Residues Asn-1025 and Asn-1045 are each glycosylated (N-linked (GlcNAc...) asparagine). A helical transmembrane segment spans residues 1083 to 1103 (WVILLAVLAGLLVLALLVLLL). At 1104–1181 (WKMGFFKRAK…PDGHPGPGTA (78 aa)) the chain is on the cytoplasmic side. Residues 1107-1111 (GFFKR) carry the GFFKR motif motif. The disordered stretch occupies residues 1138–1181 (EKTGTILRNNWGSPRREGPDAHPILAADGHPELGPDGHPGPGTA). A run of 3 repeats spans residues 1157–1160 (DAHP), 1165–1168 (DGHP), and 1173–1176 (DGHP). Residues 1157–1176 (DAHPILAADGHPELGPDGHP) form a 3 X 4 AA repeats of D-X-H-P region.

Belongs to the integrin alpha chain family. In terms of assembly, heterodimer of an alpha and a beta subunit. The alpha subunit is composed of a heavy and a light chain linked by a disulfide bond. Alpha-7 associates with beta-1. Interacts with COMP. Interacts (via C-terminus intracellular tail region) with CIB1; the interaction is stabilized/increased in a calcium- and magnesium-dependent manner. In terms of processing, ADP-ribosylated on at least two sites of the extracellular domain in skeletal myotubes. A 70 kDa form is created by proteolytic cleavage. Cleavage is elevated during myogenic differentiation and the cleaved form enhances cell adhesion and spreading on laminin. Isoforms containing segment A are predominantly expressed in skeletal muscle. Isoforms containing segment B are abundantly expressed in skeletal muscle, moderately in cardiac muscle, small intestine, colon, ovary and prostate and weakly in lung and testes. Isoforms containing segment X2D are expressed at low levels in fetal and adult skeletal muscle and in cardiac muscle, but are not detected in myoblasts and myotubes. In muscle fibers isoforms containing segment A and B are expressed at myotendinous and neuromuscular junctions; isoforms containing segment C are expressed at neuromuscular junctions and at extrasynaptic sites. Isoforms containing segments X1 or X2 or, at low levels, X1X2 are expressed in fetal and adult skeletal muscle (myoblasts and myotubes) and cardiac muscle.

Its subcellular location is the membrane. Integrin alpha-7/beta-1 is the primary laminin receptor on skeletal myoblasts and adult myofibers. During myogenic differentiation, it may induce changes in the shape and mobility of myoblasts, and facilitate their localization at laminin-rich sites of secondary fiber formation. It is involved in the maintenance of the myofibers cytoarchitecture as well as for their anchorage, viability and functional integrity. Isoform Alpha-7X2B and isoform Alpha-7X1B promote myoblast migration on laminin 1 and laminin 2/4, but isoform Alpha-7X1B is less active on laminin 1 (In vitro). Acts as a Schwann cell receptor for laminin-2. Acts as a receptor of COMP and mediates its effect on vascular smooth muscle cells (VSMCs) maturation. Required to promote contractile phenotype acquisition in differentiated airway smooth muscle (ASM) cells. The polypeptide is Integrin alpha-7 (ITGA7) (Homo sapiens (Human)).